Reading from the N-terminus, the 39-residue chain is uncharacterized protein (39 aa).

This sequence belongs to the orthopoxvirus A30.5 protein family.

This is an uncharacterized protein from Bos taurus (Bovine).